Reading from the N-terminus, the 87-residue chain is Acyl carrier protein TtuC (87 aa).

In terms of domain architecture, Carrier spans Ile-11–Lys-87. The residue at position 48 (Ser-48) is an O-(pantetheine 4'-phosphoryl)serine.

The cofactor is pantetheine 4'-phosphate.

Carrier protein likely involved in the biosynthesis of a polyyne metabolite. Accepts as substrate the activated form of decanoic acid from TtuA. This chain is Acyl carrier protein TtuC, found in Teredinibacter turnerae (strain ATCC 39867 / T7901).